The following is a 166-amino-acid chain: Crossover junction endodeoxyribonuclease RuvC (166 aa).

Active-site residues include Asp12, Glu71, and Asp143. Mg(2+) is bound by residues Asp12, Glu71, and Asp143.

Belongs to the RuvC family. Homodimer which binds Holliday junction (HJ) DNA. The HJ becomes 2-fold symmetrical on binding to RuvC with unstacked arms; it has a different conformation from HJ DNA in complex with RuvA. In the full resolvosome a probable DNA-RuvA(4)-RuvB(12)-RuvC(2) complex forms which resolves the HJ. Mg(2+) serves as cofactor.

The protein resides in the cytoplasm. It catalyses the reaction Endonucleolytic cleavage at a junction such as a reciprocal single-stranded crossover between two homologous DNA duplexes (Holliday junction).. Functionally, the RuvA-RuvB-RuvC complex processes Holliday junction (HJ) DNA during genetic recombination and DNA repair. Endonuclease that resolves HJ intermediates. Cleaves cruciform DNA by making single-stranded nicks across the HJ at symmetrical positions within the homologous arms, yielding a 5'-phosphate and a 3'-hydroxyl group; requires a central core of homology in the junction. The consensus cleavage sequence is 5'-(A/T)TT(C/G)-3'. Cleavage occurs on the 3'-side of the TT dinucleotide at the point of strand exchange. HJ branch migration catalyzed by RuvA-RuvB allows RuvC to scan DNA until it finds its consensus sequence, where it cleaves and resolves the cruciform DNA. The polypeptide is Crossover junction endodeoxyribonuclease RuvC (Oleidesulfovibrio alaskensis (strain ATCC BAA-1058 / DSM 17464 / G20) (Desulfovibrio alaskensis)).